Consider the following 176-residue polypeptide: Ribosome maturation factor RimM (176 aa).

Residues Lys-99–Asn-174 form the PRC barrel domain.

It belongs to the RimM family. In terms of assembly, binds ribosomal protein uS19.

Its subcellular location is the cytoplasm. In terms of biological role, an accessory protein needed during the final step in the assembly of 30S ribosomal subunit, possibly for assembly of the head region. Essential for efficient processing of 16S rRNA. May be needed both before and after RbfA during the maturation of 16S rRNA. It has affinity for free ribosomal 30S subunits but not for 70S ribosomes. This is Ribosome maturation factor RimM from Leptospira interrogans serogroup Icterohaemorrhagiae serovar copenhageni (strain Fiocruz L1-130).